A 171-amino-acid chain; its full sequence is Protein phosphatase 1 regulatory subunit 1A (171 aa).

Position 1 is an N-acetylmethionine (Met1). The interval 9 to 12 (KIQF) is essential for activity. The disordered stretch occupies residues 17-171 (LEPHLDPEAA…PLDSQGASLV (155 aa)). Positions 19–29 (PHLDPEAAEQI) are enriched in basic and acidic residues. Thr35 is subject to Phosphothreonine; by PKA. Residues 42–54 (TSDQSSPEVDEDR) form an essential for activity region. 4 positions are modified to phosphoserine: Ser43, Ser46, Ser47, and Ser67. Residues 122–133 (GSASRPDTSGTA) show a composition bias toward polar residues. The segment covering 137-148 (AESKPKTQEQRG) has biased composition (basic and acidic residues). Residues 143 to 171 (TQEQRGVEPSTEDLSAHMLPLDSQGASLV) form an interaction with PPP1R15A region.

The protein belongs to the protein phosphatase inhibitor 1 family. As to quaternary structure, interacts with PPP1R15A. Phosphorylation of Thr-35 is required for activity.

Its function is as follows. Inhibitor of protein-phosphatase 1. This protein may be important in hormonal control of glycogen metabolism. Hormones that elevate intracellular cAMP increase I-1 activity in many tissues. I-1 activation may impose cAMP control over proteins that are not directly phosphorylated by PKA. Following a rise in intracellular calcium, I-1 is inactivated by calcineurin (or PP2B). Does not inhibit type-2 phosphatases. The chain is Protein phosphatase 1 regulatory subunit 1A (Ppp1r1a) from Rattus norvegicus (Rat).